The sequence spans 535 residues: Thermosome subunit gamma (535 aa).

The protein belongs to the TCP-1 chaperonin family. Forms a heterooligomeric complex of two stacked nine-membered rings; one of alpha and the other of beta subunits.

The protein localises to the cytoplasm. The enzyme catalyses ATP + H2O = ADP + phosphate + H(+). Molecular chaperone; binds unfolded polypeptides in vitro, and has a weak ATPase activity. This is Thermosome subunit gamma (thsC) from Saccharolobus shibatae (strain ATCC 51178 / DSM 5389 / JCM 8931 / NBRC 15437 / B12) (Sulfolobus shibatae).